Consider the following 229-residue polypeptide: 7-cyano-7-deazaguanine synthase (229 aa).

Residue 15 to 25 (LSGGLDSATVV) coordinates ATP. C194, C204, C207, and C210 together coordinate Zn(2+).

The protein belongs to the QueC family. The cofactor is Zn(2+).

It catalyses the reaction 7-carboxy-7-deazaguanine + NH4(+) + ATP = 7-cyano-7-deazaguanine + ADP + phosphate + H2O + H(+). It participates in purine metabolism; 7-cyano-7-deazaguanine biosynthesis. Catalyzes the ATP-dependent conversion of 7-carboxy-7-deazaguanine (CDG) to 7-cyano-7-deazaguanine (preQ(0)). The chain is 7-cyano-7-deazaguanine synthase from Pseudomonas syringae pv. syringae (strain B728a).